A 359-amino-acid chain; its full sequence is Guanine nucleotide-binding protein-like alpha-11 subunit (359 aa).

G2 carries N-myristoyl glycine lipidation. The region spanning 29-359 is the G-alpha domain; that stretch reads KLIKILMMGN…YVKKILEDTI (331 aa). Residues 32-45 are G1 motif; the sequence is KILMMGNENSAKST. S44 lines the Mg(2+) pocket. Residues 176–185 form a G2 motif region; it reads DIIRCSKNNQ. GTP-binding positions include 178–185, 204–208, and 281–284; these read IRCSKNNQ, DTGNQ, and NKKE. Residues 200–209 form a G3 motif region; that stretch reads FVFVDTGNQK. The tract at residues 277 to 284 is G4 motif; the sequence is IVLFNKKE. The segment at 337–342 is G5 motif; that stretch reads FNSSDT.

The protein belongs to the G-alpha family.

The protein is Guanine nucleotide-binding protein-like alpha-11 subunit (gpaK) of Dictyostelium discoideum (Social amoeba).